Consider the following 513-residue polypeptide: Activin receptor type-2A (513 aa).

The first 19 residues, 1–19, serve as a signal peptide directing secretion; the sequence is MGAAAKLAFAVFLISCSSG. Topologically, residues 20 to 135 are extracellular; it reads AILGRSETQE…TSNPVTPKPP (116 aa). Intrachain disulfides connect cysteine 30–cysteine 60, cysteine 50–cysteine 78, cysteine 85–cysteine 104, cysteine 91–cysteine 103, and cysteine 105–cysteine 110. Residues asparagine 43 and asparagine 66 are each glycosylated (N-linked (GlcNAc...) asparagine). A helical membrane pass occupies residues 136-161; the sequence is YYNILLYSLVPLMLIAGIVICAFWVY. Residues 162-513 are Cytoplasmic-facing; that stretch reads RHHKMAYPPV…VDFPPKESSL (352 aa). Residues 192–485 form the Protein kinase domain; it reads LQLLEVKARG…GERITQMQRL (294 aa). Residues 198–206 and lysine 219 contribute to the ATP site; that span reads KARGRFGCV. Residue aspartate 322 is the Proton acceptor of the active site.

The protein belongs to the protein kinase superfamily. TKL Ser/Thr protein kinase family. TGFB receptor subfamily. As to quaternary structure, part of a complex consisting of MAGI2/ARIP1, ACVR2A, ACVR1B and SMAD3. Interacts with MAGI2/ARIP1. Interacts with type I receptor ACVR1. Interacts with BMP7. Interacts with TSC22D1/TSC-22. Interacts with activin A/INHBA. Mg(2+) is required as a cofactor. Mn(2+) serves as cofactor.

Its subcellular location is the cell membrane. It carries out the reaction L-threonyl-[receptor-protein] + ATP = O-phospho-L-threonyl-[receptor-protein] + ADP + H(+). The catalysed reaction is L-seryl-[receptor-protein] + ATP = O-phospho-L-seryl-[receptor-protein] + ADP + H(+). On ligand binding, forms a receptor complex consisting of two type II and two type I transmembrane serine/threonine kinases. Type II receptors phosphorylate and activate type I receptors which autophosphorylate, then bind and activate SMAD transcriptional regulators. Receptor for activin A, activin B and inhibin A. Mediates induction of adipogenesis by GDF6. The chain is Activin receptor type-2A (ACVR2A) from Bos taurus (Bovine).